The sequence spans 122 residues: Thioredoxin H-type (122 aa).

Residues 2–118 (AAEEGVVIAC…IVKHVGATAA (117 aa)) form the Thioredoxin domain. The cysteines at positions 40 and 43 are disulfide-linked.

It is found in the cytoplasm. Its function is as follows. Participates in various redox reactions through the reversible oxidation of the active center dithiol to a disulfide. The H form is known to activate a number of cytosolic enzymes. The polypeptide is Thioredoxin H-type (TRXH) (Oryza sativa subsp. indica (Rice)).